We begin with the raw amino-acid sequence, 458 residues long: Protein amnionless (458 aa).

The N-terminal stretch at 1–19 (MGALGRVLLWLQLCAMTRA) is a signal peptide. Over 20–362 (AYKLWVPNTS…ELNQSSSGAG (343 aa)) the chain is Extracellular. An N-linked (GlcNAc...) asparagine glycan is attached at Asn27. 6 disulfide bridges follow: Cys43–Cys96, Cys137–Cys213, Cys205–Cys211, Cys223–Cys249, Cys234–Cys250, and Cys239–Cys253. Positions 67 to 87 (SDMLLPLDGELVLASGAALSA) are interaction with CUBN. The region spanning 203 to 254 (QACTDASGCVCGNAEMLPWICASLLQPLGGRCPQAACQDPLLPQGQCCDLCG) is the VWFC domain. Residue Asn355 is glycosylated (N-linked (GlcNAc...) asparagine). The helical transmembrane segment at 363–383 (LAGGVAALVLLALLGTVLLLL) threads the bilayer. Over 384-458 (HRSGRLRWRR…LFAGEAEAEA (75 aa)) the chain is Cytoplasmic.

In terms of assembly, interacts (via extracellular region) with CUBN/cubilin. This gives rise to a huge complex containing one AMN chain and three CUBN chains. In terms of processing, N-glycosylated. Post-translationally, a soluble form arises by proteolytic removal of the membrane anchor. Expressed in polarized epithelial cells which are specialized in resorption or transport, specifically kidney proximal tubules and intestinal epithelium.

It localises to the apical cell membrane. The protein resides in the cell membrane. The protein localises to the endosome membrane. It is found in the membrane. Its subcellular location is the coated pit. Functionally, membrane-bound component of the endocytic receptor formed by AMN and CUBN. Required for normal CUBN glycosylation and trafficking to the cell surface. The complex formed by AMN and CUBN is required for efficient absorption of vitamin B12. Required for normal CUBN-mediated protein transport in the kidney. The chain is Protein amnionless (Amn) from Mus musculus (Mouse).